A 380-amino-acid chain; its full sequence is Chaperone protein DnaJ (380 aa).

Residues 5 to 70 (DYYEVLGVER…SKRAAYDQYG (66 aa)) form the J domain. A CR-type zinc finger spans residues 139–217 (GTTVNIRVPT…CHGEGRVEES (79 aa)). Residues cysteine 152, cysteine 155, cysteine 169, cysteine 172, cysteine 191, cysteine 194, cysteine 205, and cysteine 208 each coordinate Zn(2+). 4 CXXCXGXG motif repeats span residues 152–159 (CKPCDGSG), 169–176 (CPTCGGIG), 191–198 (CPRCHGHG), and 205–212 (CDSCHGEG).

This sequence belongs to the DnaJ family. Homodimer. It depends on Zn(2+) as a cofactor.

Its subcellular location is the cytoplasm. Participates actively in the response to hyperosmotic and heat shock by preventing the aggregation of stress-denatured proteins and by disaggregating proteins, also in an autonomous, DnaK-independent fashion. Unfolded proteins bind initially to DnaJ; upon interaction with the DnaJ-bound protein, DnaK hydrolyzes its bound ATP, resulting in the formation of a stable complex. GrpE releases ADP from DnaK; ATP binding to DnaK triggers the release of the substrate protein, thus completing the reaction cycle. Several rounds of ATP-dependent interactions between DnaJ, DnaK and GrpE are required for fully efficient folding. Also involved, together with DnaK and GrpE, in the DNA replication of plasmids through activation of initiation proteins. The chain is Chaperone protein DnaJ from Pseudomonas syringae pv. tomato (strain ATCC BAA-871 / DC3000).